The sequence spans 534 residues: Neryl diphosphate diphosphatase, chloroplastic (534 aa).

Residues Asp-272, Asp-276, Asp-416, and Glu-424 each contribute to the Mg(2+) site. The short motif at 272 to 276 (DDIFD) is the DDXXD motif element.

Belongs to the terpene synthase family. Mg(2+) is required as a cofactor.

It localises to the plastid. The protein resides in the chloroplast. It carries out the reaction neryl diphosphate + H2O = nerol + diphosphate. It functions in the pathway secondary metabolite biosynthesis; terpenoid biosynthesis. Functionally, monoterpene synthase that catalyzes the hydrolysis of neryl diphosphate (NPP) to form nerol and diphosphate. Is specific for NPP and has no hydrolase activity toward geranyl diphosphate (GPP) or farnesyl diphosphate (FPP). The monoterpene nerol may have an insect repellent effect for the plant leaves. The sequence is that of Neryl diphosphate diphosphatase, chloroplastic from Glycine max (Soybean).